The primary structure comprises 538 residues: Putative cysteine ligase BshC (538 aa).

Positions 460 to 484 form a coiled coil; that stretch reads KINEQIELLERMLKRNVEKKHEVEL.

This sequence belongs to the BshC family.

Functionally, involved in bacillithiol (BSH) biosynthesis. May catalyze the last step of the pathway, the addition of cysteine to glucosamine malate (GlcN-Mal) to generate BSH. This is Putative cysteine ligase BshC from Bacillus cereus (strain ATCC 10987 / NRS 248).